The chain runs to 369 residues: IPRVTPSTLTALAEEKTLQTSFIRDEDERPKVAYNQFSNEIPIISLEGIDDETGKRAEICDKIVKACEDWGVFQVVDHGVDAEVISQMTTFAKEFFALPPEEKLRFDMSGGKKGGFIVSSHLQGEVVQDWREIVTYFSYPTRARDYSRWPDKPEGWIAVTQKYSEKLMELACKLLDVLSEAMGLEKEALTKACVDMDQKVVVNFYPKCPEPDLTLGLKRHTDPGTITLLLQDQVGGLQATKDNGKTWITVQPVEGAFVVNLGDHGHFLSNGRFKNADHQAVVNSNSSRLSIATFQNPAPEAIVYPLKIREGEKSIMDEPITFAEMYRRKMSKDLELARLKKQAKEQQLQAEVAAEKAKLESKPIEEILA.

The region spanning C193–P297 is the Fe2OG dioxygenase domain. The Fe cation site is built by H220, D222, and H278. R288 is a 2-oxoglutarate binding site.

Belongs to the iron/ascorbate-dependent oxidoreductase family. The cofactor is Fe(2+). L-ascorbate is required as a cofactor.

It catalyses the reaction a (2S)-flavan-4-one + 2-oxoglutarate + O2 = a (2R,3R)-dihydroflavonol + succinate + CO2. The protein operates within secondary metabolite biosynthesis; flavonoid biosynthesis. Catalyzes the 3-beta-hydroxylation of 2S-flavanones to 2R,3R-dihydroflavonols which are intermediates in the biosynthesis of flavonols, anthocyanidins, catechins and proanthocyanidins in plants. This chain is Naringenin,2-oxoglutarate 3-dioxygenase (AN3), found in Petunia hybrida (Petunia).